Reading from the N-terminus, the 115-residue chain is Large ribosomal subunit protein uL24 (115 aa).

It belongs to the universal ribosomal protein uL24 family. As to quaternary structure, part of the 50S ribosomal subunit.

Functionally, one of two assembly initiator proteins, it binds directly to the 5'-end of the 23S rRNA, where it nucleates assembly of the 50S subunit. One of the proteins that surrounds the polypeptide exit tunnel on the outside of the subunit. The sequence is that of Large ribosomal subunit protein uL24 from Acaryochloris marina (strain MBIC 11017).